Here is a 283-residue protein sequence, read N- to C-terminus: uncharacterized protein (283 aa).

A lipid anchor (N-myristoyl glycine; by host) is attached at Gly2. N-linked (GlcNAc...) asparagine; by host glycosylation is found at Asn31, Asn95, Asn105, Asn108, Asn137, and Asn147. Transmembrane regions (helical) follow at residues 181 to 201 and 250 to 270; these read IIAA…VVYF and FIVL…LDIP. Residue Asn277 is glycosylated (N-linked (GlcNAc...) asparagine; by host).

Its subcellular location is the membrane. This is an uncharacterized protein from Acanthamoeba polyphaga (Amoeba).